The primary structure comprises 507 residues: Sperm-associated antigen 6 (507 aa).

ARM repeat units follow at residues 31-70, 73-112, 115-154, 157-196, 199-238, 241-280, 325-365, and 402-441; these read PQNI…RLAN, DDLA…AVGK, PQLA…YIAR, TELS…DISK, PELA…QIAK, VDLA…EIAK, ENLA…QLGR, and KAIK…KVLP.

Interacts with SPAG16 and SPAG17. In terms of tissue distribution, highly expressed in testis. Not detected in prostate, ovary, spleen, thymus, small intestine, colon and peripheral blood leukocytes.

The protein localises to the cytoplasm. It localises to the cytoskeleton. It is found in the cell projection. The protein resides in the cilium. Its subcellular location is the flagellum. The protein localises to the cilium axoneme. Its function is as follows. Important for structural integrity of the central apparatus in the sperm tail and for flagellar motility. This is Sperm-associated antigen 6 (Spag6) from Mus musculus (Mouse).